Consider the following 408-residue polypeptide: Aminomethyltransferase, mitochondrial (408 aa).

A mitochondrion-targeting transit peptide spans 1–30; the sequence is MRGGLWQLGQSITRRLANGGDKKAVARRCF. Substrate is bound by residues glutamate 235, arginine 266, and tyrosine 404.

The protein belongs to the GcvT family. As to quaternary structure, the glycine cleavage system is composed of four proteins: P, T, L and H.

Its subcellular location is the mitochondrion. It carries out the reaction N(6)-[(R)-S(8)-aminomethyldihydrolipoyl]-L-lysyl-[protein] + (6S)-5,6,7,8-tetrahydrofolate = N(6)-[(R)-dihydrolipoyl]-L-lysyl-[protein] + (6R)-5,10-methylene-5,6,7,8-tetrahydrofolate + NH4(+). Its function is as follows. The glycine cleavage system catalyzes the degradation of glycine. The polypeptide is Aminomethyltransferase, mitochondrial (GDCST) (Pisum sativum (Garden pea)).